Consider the following 299-residue polypeptide: UDP-N-acetylenolpyruvoylglucosamine reductase (299 aa).

The FAD-binding PCMH-type domain maps to 26 to 191 (GIGGPAKYFV…VSATFQLNAS (166 aa)). The active site involves R170. The active-site Proton donor is C218. E288 is a catalytic residue.

This sequence belongs to the MurB family. FAD is required as a cofactor.

It localises to the cytoplasm. It catalyses the reaction UDP-N-acetyl-alpha-D-muramate + NADP(+) = UDP-N-acetyl-3-O-(1-carboxyvinyl)-alpha-D-glucosamine + NADPH + H(+). The protein operates within cell wall biogenesis; peptidoglycan biosynthesis. Cell wall formation. The protein is UDP-N-acetylenolpyruvoylglucosamine reductase of Protochlamydia amoebophila (strain UWE25).